Consider the following 199-residue polypeptide: MDEEMLIPEEEYQKSGVHIGTQVKSSDMKPYIFKIRNDGLYILDVKKTNSKLIVAGKMLARFEPQDILVVAQRQYAFRPVAKFAEVTGATAITGRFNPGTLTNPSLKFYKEVKVIIVTDPLADVQAMKEAVKIGIPIIALCDANNKTDFVDLIIPTNNKGRRSLAVIYWLLAREILKNRGTITSYDQFKYTIDDFEAQI.

Belongs to the universal ribosomal protein uS2 family.

This Thermoplasma acidophilum (strain ATCC 25905 / DSM 1728 / JCM 9062 / NBRC 15155 / AMRC-C165) protein is Small ribosomal subunit protein uS2 (rps2).